The following is a 75-amino-acid chain: Small ribosomal subunit protein bS18 (75 aa).

This sequence belongs to the bacterial ribosomal protein bS18 family. In terms of assembly, part of the 30S ribosomal subunit. Forms a tight heterodimer with protein bS6.

In terms of biological role, binds as a heterodimer with protein bS6 to the central domain of the 16S rRNA, where it helps stabilize the platform of the 30S subunit. The sequence is that of Small ribosomal subunit protein bS18 from Cereibacter sphaeroides (strain KD131 / KCTC 12085) (Rhodobacter sphaeroides).